Here is a 346-residue protein sequence, read N- to C-terminus: fMet-Leu-Phe receptor (346 aa).

Asparagine 1 and asparagine 7 each carry an N-linked (GlcNAc...) asparagine glycan. Over 1–24 the chain is Extracellular; that stretch reads NSSLPTNISGGTPAVSAGYLFLDI. A helical membrane pass occupies residues 25 to 47; sequence ITYLVFAVTFVLGVLGNGLVIWV. Residues 48–58 lie on the Cytoplasmic side of the membrane; it reads AGFRMTHTVTT. A helical transmembrane segment spans residues 59-80; the sequence is ISYLNLAVADFCFTSTLPFFMV. The Extracellular segment spans residues 81-97; sequence RKAMGGHWPFGWFLCKF. Cysteine 95 and cysteine 173 are disulfide-bonded. The chain crosses the membrane as a helical span at residues 98–118; it reads IFTIVDINLFGSVFLIALIAL. The Cytoplasmic segment spans residues 119–137; that stretch reads DRCVCVLHPVWTQNHRTVS. A helical membrane pass occupies residues 138–159; that stretch reads LAKKVIIGPWVMALLLTLPVII. Residues 160 to 202 are Extracellular-facing; the sequence is RVTTVPGKTGTVACTFNFSPWTNDPKERINVAIAMLTVRGIIR. A helical membrane pass occupies residues 203-223; that stretch reads FIIGFSAPMSIVAVSYGLIAT. At 224-239 the chain is on the cytoplasmic side; it reads KIHKQGLIKFSRPLRV. A helical membrane pass occupies residues 240–263; sequence LSFVAAAFFLCWSPYQVVALIATV. At 264–282 the chain is on the extracellular side; sequence RIRELLQGMYKEIGIAVDV. The chain crosses the membrane as a helical span at residues 283 to 302; that stretch reads TSALAFFNSCLNPMLYVFMG. Residues 303 to 346 are Cytoplasmic-facing; the sequence is QDFRERLIHALPASLERALTEDSTQTSDTATNSTLPSAEVALQA. Residues 322–346 form a disordered region; the sequence is TEDSTQTSDTATNSTLPSAEVALQA. Polar residues predominate over residues 323-338; it reads EDSTQTSDTATNSTLP.

The protein belongs to the G-protein coupled receptor 1 family. Post-translationally, phosphorylated; which is necessary for desensitization.

Its subcellular location is the cell membrane. In terms of biological role, high affinity receptor for N-formyl-methionyl peptides (fMLP), which are powerful neutrophil chemotactic factors. Binding of fMLP to the receptor stimulates intracellular calcium mobilization and superoxide anion release. This response is mediated via a G-protein that activates a phosphatidylinositol-calcium second messenger system. Receptor for TAFA4, mediates its effects on chemoattracting macrophages, promoting phagocytosis and increasing ROS release. Receptor for cathepsin CTSG, leading to increased phagocyte chemotaxis. This is fMet-Leu-Phe receptor (FPR1) from Pan troglodytes (Chimpanzee).